The chain runs to 30 residues: AEVLMDFPQLTMTLPDGREESVMKLTTLVA.

Belongs to the ATPase alpha/beta chains family. V-ATPase is a heteromultimeric enzyme composed of a peripheral catalytic V1 complex (main components: subunits A, B, C, D, E, and F) attached to an integral membrane V0 proton pore complex (main component: the proteolipid protein).

The enzyme catalyses ATP + H2O + 4 H(+)(in) = ADP + phosphate + 5 H(+)(out). Its function is as follows. Catalytic subunit of the peripheral V1 complex of vacuolar ATPase. V-ATPase vacuolar ATPase is responsible for acidifying a variety of intracellular compartments in eukaryotic cells. The protein is V-type proton ATPase catalytic subunit A isoform 1 of Equisetum arvense (Field horsetail).